Here is a 450-residue protein sequence, read N- to C-terminus: ATP-dependent protease ATPase subunit HslU (450 aa).

Residues Ile18 and 60-65 (GVGKTE) each bind ATP. Positions 140–151 (KTSSSGWAQQQE) are enriched in polar residues. The segment at 140 to 162 (KTSSSGWAQQQEETPENDDQRGT) is disordered. ATP is bound by residues Asp263, Glu328, and Arg400.

This sequence belongs to the ClpX chaperone family. HslU subfamily. As to quaternary structure, a double ring-shaped homohexamer of HslV is capped on each side by a ring-shaped HslU homohexamer. The assembly of the HslU/HslV complex is dependent on binding of ATP.

It is found in the cytoplasm. In terms of biological role, ATPase subunit of a proteasome-like degradation complex; this subunit has chaperone activity. The binding of ATP and its subsequent hydrolysis by HslU are essential for unfolding of protein substrates subsequently hydrolyzed by HslV. HslU recognizes the N-terminal part of its protein substrates and unfolds these before they are guided to HslV for hydrolysis. This Idiomarina loihiensis (strain ATCC BAA-735 / DSM 15497 / L2-TR) protein is ATP-dependent protease ATPase subunit HslU.